Reading from the N-terminus, the 101-residue chain is MAKVSSVQKNLKRSRLFNKLKLKRQALKSKIYDKNLSLEERFNLVLKLSKLPRNSSSTRIRNRCAETGRPRGYYRKFKLCRNIIRELAGSGIIPGLRKSSW.

This sequence belongs to the universal ribosomal protein uS14 family. As to quaternary structure, part of the 30S ribosomal subunit. Contacts proteins S3 and S10.

Functionally, binds 16S rRNA, required for the assembly of 30S particles and may also be responsible for determining the conformation of the 16S rRNA at the A site. This is Small ribosomal subunit protein uS14 from Orientia tsutsugamushi (strain Boryong) (Rickettsia tsutsugamushi).